A 65-amino-acid polypeptide reads, in one-letter code: MPKMKTKKSAAKRFVVRPGGTVKRGQAFKRHILTKKTTKNKRHLRGATAVHDSDLNSVRAMLPFA.

The protein belongs to the bacterial ribosomal protein bL35 family.

This chain is Large ribosomal subunit protein bL35, found in Burkholderia ambifaria (strain MC40-6).